Consider the following 346-residue polypeptide: MIELKNVSKVFTTKKGNVEALKSTSLQVKKGEVFGIIGYSGAGKSTLIRCVNLLEKPTTGNIIVNEQDLTTLSTKELAKARQKIGMIFQGFNLLKTVTVYENIALPLRLAGVPKLEIEKRVEKYLRIVDLFNRKDAYPSELSGGQKQRVAIARALSHEPEVLLSDEATSALDPETTDSILDLLLKINEEIGITILLITHEMNVIQRICDRVAVMEHGAVIESGTVKEIFTNPQHVTTKKFVNSAFAAKIPAEVQKELQRTGEIVTLSFIGNSSGEPALAIATKRFQVYPNILSGNITQLKHEAYGKLVIHMQGEKNEVDRALSFLQEQGIIVEGGRTDYGKQVLFG.

The region spanning 2–241 (IELKNVSKVF…PQHVTTKKFV (240 aa)) is the ABC transporter domain. 38–45 (GYSGAGKS) contacts ATP.

It belongs to the ABC transporter superfamily. Methionine importer (TC 3.A.1.24) family. The complex is composed of two ATP-binding proteins (MetN), two transmembrane proteins (MetI) and a solute-binding protein (MetQ).

It is found in the cell membrane. The enzyme catalyses L-methionine(out) + ATP + H2O = L-methionine(in) + ADP + phosphate + H(+). It catalyses the reaction D-methionine(out) + ATP + H2O = D-methionine(in) + ADP + phosphate + H(+). Part of the ABC transporter complex MetNIQ involved in methionine import. Responsible for energy coupling to the transport system. The sequence is that of Methionine import ATP-binding protein MetN 1 from Bacillus cereus (strain ZK / E33L).